Consider the following 139-residue polypeptide: D-ribose pyranase (139 aa).

His20 serves as the catalytic Proton donor. Substrate-binding positions include Asp28, His106, and 128-130 (YAN).

This sequence belongs to the RbsD / FucU family. RbsD subfamily. In terms of assembly, homodecamer.

The protein localises to the cytoplasm. The catalysed reaction is beta-D-ribopyranose = beta-D-ribofuranose. Its pathway is carbohydrate metabolism; D-ribose degradation; D-ribose 5-phosphate from beta-D-ribopyranose: step 1/2. Functionally, catalyzes the interconversion of beta-pyran and beta-furan forms of D-ribose. The protein is D-ribose pyranase of Photorhabdus laumondii subsp. laumondii (strain DSM 15139 / CIP 105565 / TT01) (Photorhabdus luminescens subsp. laumondii).